A 200-amino-acid chain; its full sequence is Coiled-coil domain-containing protein 85B (200 aa).

Residues 57 to 84 (LQGHLLEIRELKVINQRLQEENQELRDL) are a coiled coil. Residues 178 to 188 (DGSSSTGSVGS) show a composition bias toward low complexity. A disordered region spans residues 178–200 (DGSSSTGSVGSPDQLHLVCSPDD).

It belongs to the CCDC85 family.

The protein resides in the nucleus. It localises to the cytoplasm. It is found in the cytoskeleton. The protein localises to the microtubule organizing center. Its subcellular location is the centrosome. The protein resides in the cell junction. It localises to the adherens junction. Functions as a transcriptional repressor. May inhibit the activity of CTNNB1 in a TP53-dependent manner and thus regulate cell growth. May function in adipocyte differentiation, negatively regulating mitotic clonal expansion. Plays a role in cell-cell adhesion and epithelium development through its interaction with proteins of the beta-catenin family. This Danio rerio (Zebrafish) protein is Coiled-coil domain-containing protein 85B (ccdc85b).